The chain runs to 424 residues: Protein UL117 (424 aa).

Residues 57–82 (IVPTTSSSLAPPRDDERRPTPPLRPP) are disordered.

This sequence belongs to the herpesviridae U84 family.

The protein resides in the host nucleus. In terms of biological role, plays a role in the inhibition of host DNA replication in the infected cell. Targets the mini-chromosome maintenance (MCM) complex and blocks the accumulation of MCM proteins and their loading onto host chromatin. The polypeptide is Protein UL117 (UL117) (Human cytomegalovirus (strain AD169) (HHV-5)).